The chain runs to 359 residues: Large ribosomal subunit protein bL27m (359 aa).

The N-terminal 24 residues, 1–24 (MSFWKVATLWQMPLRPSILVQVRT), are a transit peptide targeting the mitochondrion. Residues 29 to 48 (AAGSRTSMKDSAGRRLGPKK) are disordered. Positions 35–48 (SMKDSAGRRLGPKK) are enriched in basic and acidic residues.

This sequence belongs to the bacterial ribosomal protein bL27 family.

It is found in the mitochondrion. In terms of biological role, component of the large subunit of mitochondrial ribosome. In Eremothecium gossypii (strain ATCC 10895 / CBS 109.51 / FGSC 9923 / NRRL Y-1056) (Yeast), this protein is Large ribosomal subunit protein bL27m (MRPL2).